Reading from the N-terminus, the 241-residue chain is Octanoyltransferase (241 aa).

The BPL/LPL catalytic domain occupies 43–228 (AETPDEIWLV…CLTANLDGSP (186 aa)). Substrate-binding positions include 83–90 (RGGQITYH), 159–161 (ALG), and 172–174 (GVS). The Acyl-thioester intermediate role is filled by cysteine 190.

It belongs to the LipB family.

Its subcellular location is the cytoplasm. The catalysed reaction is octanoyl-[ACP] + L-lysyl-[protein] = N(6)-octanoyl-L-lysyl-[protein] + holo-[ACP] + H(+). It participates in protein modification; protein lipoylation via endogenous pathway; protein N(6)-(lipoyl)lysine from octanoyl-[acyl-carrier-protein]: step 1/2. Its function is as follows. Catalyzes the transfer of endogenously produced octanoic acid from octanoyl-acyl-carrier-protein onto the lipoyl domains of lipoate-dependent enzymes. Lipoyl-ACP can also act as a substrate although octanoyl-ACP is likely to be the physiological substrate. This chain is Octanoyltransferase, found in Paraburkholderia xenovorans (strain LB400).